The sequence spans 265 residues: MPVVSLAELLESGVHFGHQTRRWNPKMSQYIYTARNGVHIIDLVQTAQLIEEAYEFVRGEADRGKRFLFIGTKRQAAAIIKQEALRSGSHFVNQRWLGGMLTNWETIRGRVERLKELEELENSGALDKRPKKEASVLRRELGKLEKYLGGIKTMRRLPDLVVVVDQRREYNAIQECQKLGIPIISLLDTNCDPDLVDVPIPANDDAIRSVKLILGKISDAIIEGRRGGQAAVEEYEEDYDNETEYEEEGDYSQYAAEFASGDDDN.

The protein belongs to the universal ribosomal protein uS2 family.

The polypeptide is Small ribosomal subunit protein uS2 (Microcystis aeruginosa (strain NIES-843 / IAM M-2473)).